The following is a 550-amino-acid chain: M-phase inducer phosphatase 1-B (550 aa).

2 disordered regions span residues 76 to 98 (NLGD…GKVE) and 285 to 335 (SPSM…QRRG). A compositionally biased stretch (basic and acidic residues) spans 290–310 (EKLDRPMLKRPVRPLDSETPV). The segment covering 322–335 (LQPQEENFQPQRRG) has biased composition (polar residues). Positions 401 to 508 (LVEKIFIIDC…FFPEYKELCE (108 aa)) constitute a Rhodanese domain. Cys-457 is an active-site residue.

It belongs to the MPI phosphatase family.

The enzyme catalyses O-phospho-L-tyrosyl-[protein] + H2O = L-tyrosyl-[protein] + phosphate. Tyrosine protein phosphatase which functions as a dosage-dependent inducer of mitotic progression. Directly dephosphorylates CDK1 and stimulates its kinase activity. In Xenopus laevis (African clawed frog), this protein is M-phase inducer phosphatase 1-B (cdc25-1-b).